Reading from the N-terminus, the 428-residue chain is Pyruvate dehydrogenase E1 component subunit alpha-3, chloroplastic (428 aa).

Residues 1 to 61 constitute a chloroplast transit peptide; sequence MATAFAPTKL…NATRRSPVVS (61 aa). Histidine 115, tyrosine 141, arginine 142, alanine 190, isoleucine 192, aspartate 227, glycine 228, and asparagine 256 together coordinate pyruvate. 8 residues coordinate thiamine diphosphate: tyrosine 141, arginine 142, alanine 190, isoleucine 192, aspartate 227, glycine 228, asparagine 256, and histidine 325. Aspartate 227 serves as a coordination point for Mg(2+). Asparagine 256 provides a ligand contact to Mg(2+).

Tetramer of 2 alpha and 2 beta subunits. Requires thiamine diphosphate as cofactor. Mg(2+) serves as cofactor.

It is found in the plastid. The protein resides in the chloroplast. The catalysed reaction is N(6)-[(R)-lipoyl]-L-lysyl-[protein] + pyruvate + H(+) = N(6)-[(R)-S(8)-acetyldihydrolipoyl]-L-lysyl-[protein] + CO2. Functionally, the pyruvate dehydrogenase complex catalyzes the overall conversion of pyruvate to acetyl-CoA and CO(2). It contains multiple copies of three enzymatic components: pyruvate dehydrogenase (E1), dihydrolipoamide acetyltransferase (E2) and lipoamide dehydrogenase (E3). In Arabidopsis thaliana (Mouse-ear cress), this protein is Pyruvate dehydrogenase E1 component subunit alpha-3, chloroplastic (PDH-E1 ALPHA).